We begin with the raw amino-acid sequence, 413 residues long: Tyrosine--tRNA ligase (413 aa).

The 'HIGH' region motif lies at 59 to 68; it reads PTAPDIHLGH. A 'KMSKS' region motif is present at residues 243-247; the sequence is KMSKS. Lys246 serves as a coordination point for ATP. The 61-residue stretch at 351–411 folds into the S4 RNA-binding domain; the sequence is LAIGQLLKQA…GKRRFARVTL (61 aa).

Belongs to the class-I aminoacyl-tRNA synthetase family. TyrS type 2 subfamily. Homodimer.

The protein resides in the cytoplasm. It carries out the reaction tRNA(Tyr) + L-tyrosine + ATP = L-tyrosyl-tRNA(Tyr) + AMP + diphosphate + H(+). Catalyzes the attachment of tyrosine to tRNA(Tyr) in a two-step reaction: tyrosine is first activated by ATP to form Tyr-AMP and then transferred to the acceptor end of tRNA(Tyr). This chain is Tyrosine--tRNA ligase, found in Burkholderia mallei (strain ATCC 23344).